A 136-amino-acid polypeptide reads, in one-letter code: Large-conductance mechanosensitive channel (136 aa).

The next 2 membrane-spanning stretches (helical) occupy residues 10-30 (FAMRGNVVDLAVGVIIGAAFG) and 76-96 (GVFIQNVFDFLIVAFAIFMAI).

This sequence belongs to the MscL family. In terms of assembly, homopentamer.

The protein resides in the cell inner membrane. Functionally, channel that opens in response to stretch forces in the membrane lipid bilayer. May participate in the regulation of osmotic pressure changes within the cell. This Shigella boydii serotype 18 (strain CDC 3083-94 / BS512) protein is Large-conductance mechanosensitive channel.